The primary structure comprises 257 residues: Small ribosomal subunit protein uS3 (257 aa).

One can recognise a KH type-2 domain in the interval 39 to 112; that stretch reads IRKFLNKKYN…EIVFNVVEVR (74 aa). The disordered stretch occupies residues 217-257; sequence HEELRKERQSSASSNHGGGKRRPSRKGPRRSQEDAATEGGN. Over residues 234–245 the composition is skewed to basic residues; sequence GGKRRPSRKGPR.

It belongs to the universal ribosomal protein uS3 family. In terms of assembly, part of the 30S ribosomal subunit. Forms a tight complex with proteins S10 and S14.

Binds the lower part of the 30S subunit head. Binds mRNA in the 70S ribosome, positioning it for translation. In Haploplasma axanthum (Acholeplasma axanthum), this protein is Small ribosomal subunit protein uS3.